The primary structure comprises 1214 residues: Sodium bicarbonate cotransporter 3 (1214 aa).

A compositionally biased stretch (basic and acidic residues) spans 1–12 (MERFRLEKKLPG). 2 disordered regions span residues 1–22 (MERF…VDLG) and 52–93 (SKES…PSQR). Topologically, residues 1–608 (MERFRLEKKL…DFKDALSLQC (608 aa)) are extracellular. Phosphoserine is present on residues S52, S55, S84, S150, L165, and C168. Over residues 55-72 (SRRRHRHRGHKHHHRRRK) the composition is skewed to basic residues. Residues 73–85 (DKESDKEDGRESP) show a composition bias toward basic and acidic residues. N171 carries N-linked (GlcNAc...) asparagine glycosylation. 8 positions are modified to phosphoserine: S233, S242, S255, R258, S260, T263, G264, and A267. An N-linked (GlcNAc...) asparagine glycan is attached at N269. Disordered stretches follow at residues 289–346 (SRAG…IPTV), 362–408 (EEQK…ENST), and 552–572 (FHNG…HHAG). Pro residues predominate over residues 303–313 (VPTPQNSPPSS). The segment covering 314-332 (PSISRLTSRSSQESQRQAP) has biased composition (low complexity). Polar residues predominate over residues 379-392 (SPQSAPGNLDNSKS). Residue S382 is modified to Phosphoserine. N-linked (GlcNAc...) asparagine glycosylation occurs at N398. 2 positions are modified to phosphoserine: S400 and S403. An N-linked (GlcNAc...) asparagine glycan is attached at N406. 2 positions are modified to phosphoserine: S407 and S556. T557 bears the Phosphothreonine mark. Over residues 563 to 572 (TPKEAAHHAG) the composition is skewed to basic and acidic residues. A helical membrane pass occupies residues 609-629 (LASILFLYCACMSPVITFGGL). Residues 630-637 (LGEATEGR) are Cytoplasmic-facing. Residues 638–658 (ISAIESLFGASLTGIAYSLFA) form a helical membrane-spanning segment. Over 659 to 695 (GQPLTILGSTGPVLVFEKILYKFCRDYQLSYLSLRTS) the chain is Extracellular. Residues 696-716 (IGLWTSFLCIVLVATDASSLV) form a helical membrane-spanning segment. The Cytoplasmic segment spans residues 717-725 (CYITRFTEE). The helical transmembrane segment at 726–746 (AFAALICIIFIYEALEKLFDL) threads the bilayer. Phosphoserine is present on K742. Over 747–817 (GETYAFNMHN…VFLGSACGHH (71 aa)) the chain is Extracellular. Residues C766 and C768 are joined by a disulfide bond. Residues P771 and P774 each carry the phosphoserine modification. N776 is a glycosylation site (N-linked (GlcNAc...) asparagine). A780 is modified (phosphoserine). 2 N-linked (GlcNAc...) asparagine glycosylation sites follow: N786 and N791. Residues C802 and C814 are joined by a disulfide bond. The helical transmembrane segment at 818–838 (GPYIPDVLFWCVILFFTTFFL) threads the bilayer. At 839–861 (SSFLKQFKTKRYFPTKVRSTISD) the chain is on the cytoplasmic side. A helical transmembrane segment spans residues 862 to 882 (FAVFLTIVIMVTIDYLVGVPS). Residues 883-908 (PKLHVPEKFEPTHPERGWIISPLGDN) lie on the Extracellular side of the membrane. Residues 909–929 (PWWTLLIAAIPALLCTILIFM) traverse the membrane as a helical segment. Topologically, residues 930–954 (DQQITAVIINRKEHKLKKGAGYHLD) are cytoplasmic. Residues 955–975 (LLMVGVMLGVCSVMGLPWFVA) traverse the membrane as a helical segment. Residues 976–1011 (ATVLSISHVNSLKVESECSAPGEQPKFLGIREQRVT) lie on the Extracellular side of the membrane. Phosphoserine is present on residues E1007, V1010, and F1016. Essential for cell membrane localization and transport activity stretches follow at residues 1008-1131 (QRVT…KREL) and 1127-1214 (TKRE…ETSL). Residues 1012 to 1032 (GLMIFILMGLSVFMTSVLKFI) form a helical membrane-spanning segment. The Cytoplasmic segment spans residues 1033–1034 (PM). The chain crosses the membrane as a helical span at residues 1035 to 1055 (PVLYGVFLYMGVSSLKGIQLF). Residues 1056-1092 (DRIKLFGMPAKHQPDLIYLRYVPLWKVHIFTVIQLTC) lie on the Extracellular side of the membrane. A phosphoserine mark is found at Y1073, V1077, S1102, A1105, V1106, P1109, M1111, and L1115. The chain crosses the membrane as a helical span at residues 1093-1113 (LVLLWVIKVSAAAVVFPMMVL). Residues 1114–1214 (ALVFVRKLMD…KKYVDAETSL (101 aa)) lie on the Cytoplasmic side of the membrane. The tract at residues 1134–1136 (LDD) is CA2-binding. Positions 1144 to 1162 (KKEDDKKKKEKEEAERMLQ) are enriched in basic and acidic residues. A disordered region spans residues 1144 to 1169 (KKEDDKKKKEKEEAERMLQDDDDTVH). Phosphothreonine is present on T1167. A phosphoserine mark is found at S1176, S1188, D1201, and S1213. Residues 1211-1214 (ETSL) carry the PDZ-binding motif.

This sequence belongs to the anion exchanger (TC 2.A.31) family. Interacts with CFTR through NHERF1/EBP50. Interacts with USH1C. Forms a complex with ATP6V1B1 and NHERF1/EBP50. Interacts in a pH dependent-manner with CA2/carbonic anhydrase 2. In terms of tissue distribution, highly expressed in testis and spleen. Also expressed in retina, colon, small intestine, ovary, thymus, prostate, muscle, heart and kidney. As to expression, expressed in skeletal muscle and heart muscle.

The protein localises to the basolateral cell membrane. It localises to the apical cell membrane. The protein resides in the cell projection. Its subcellular location is the stereocilium. It is found in the cell membrane. It catalyses the reaction hydrogencarbonate(in) + Na(+)(in) = hydrogencarbonate(out) + Na(+)(out). Its activity is regulated as follows. Transporter activity is regulated by CA2/carbonic anhydrase 2, cAMP and PKA. Insensitive to stilbene derivatives. Inhibited by 5-(N-ethyl-N-isopropyl)-amiloride (EIPA). Functionally, electroneutral sodium- and bicarbonate-dependent cotransporter with a Na(+):HCO3(-) 1:1 stoichiometry. Mediates the sodium-dependent bicarbonate transport important for pH recovery after acid load as well as for regulation of steady-state pH in the duodenum and vascular smooth muscle cells. Plays a key role in macrophage acidification, mediating bicarbonate import into the cytoplasm which is crucial for net acid extrusion and maintenance of cytoplasmic pH during phagocytosis. Provides cellular bicarbonate for de novo purine and pyrimidine synthesis and is a key mediator of de novo nucleotide synthesis downstream of mTORC1 signaling in proliferating cells. In terms of biological role, plays a key role in macrophage acidification, mediating bicarbonate import into the cytoplasm which is crucial for net acid extrusion and maintenance of cytoplasmic pH during phagocytosis. This chain is Sodium bicarbonate cotransporter 3 (SLC4A7), found in Homo sapiens (Human).